The chain runs to 303 residues: ATP synthase subunit a (303 aa).

6 helical membrane-spanning segments follow: residues 59–79 (HTVMMWLAALLLMATLFIWGN), 122–142 (FLLTVFFFILFMNMLGMVPWM), 148–168 (NLAVTMALALCTFVITQVAGI), 181–201 (TGGVAPWLWPIMVPVEVLGLF), 220–240 (IVYFFLLGLIFLLGHPAVAAV), and 244–264 (FAFAIFLLELFVAFVQAYVFA). Positions 281–290 (HDDHGHDHPE) are enriched in basic and acidic residues. The segment at 281–303 (HDDHGHDHPEAGPSHDQGKAHHA) is disordered.

Belongs to the ATPase A chain family. As to quaternary structure, F-type ATPases have 2 components, CF(1) - the catalytic core - and CF(0) - the membrane proton channel. CF(1) has five subunits: alpha(3), beta(3), gamma(1), delta(1), epsilon(1). CF(0) has three main subunits: a(1), b(2) and c(9-12). The alpha and beta chains form an alternating ring which encloses part of the gamma chain. CF(1) is attached to CF(0) by a central stalk formed by the gamma and epsilon chains, while a peripheral stalk is formed by the delta and b chains.

Its subcellular location is the cell inner membrane. Its function is as follows. Key component of the proton channel; it plays a direct role in the translocation of protons across the membrane. The sequence is that of ATP synthase subunit a from Myxococcus xanthus (strain DK1622).